The following is a 159-amino-acid chain: MKLLSKIMIIALAASMLQACNGQSGMNKQGTGTLLGGAGGALLGSQFGQGKGQLVGVGVGALLGAVLGGQIGASMDEQDRRLLELTSQRALESAPSGSNIEWRNPDNGNHGYVTPNKTYRNSAGQYCREYTQTVIIGGKQQKTYGNACRQPDGQWQVVN.

An N-terminal signal peptide occupies residues 1 to 19; sequence MKLLSKIMIIALAASMLQA. Cys20 carries the N-palmitoyl cysteine lipid modification. A lipid anchor (S-diacylglycerol cysteine) is attached at Cys20.

It belongs to the rickettsiale 17 kDa surface antigen family.

It localises to the cell outer membrane. The chain is 17 kDa surface antigen (omp) from Rickettsia prowazekii (strain Madrid E).